The following is a 189-amino-acid chain: MTIDEKMLKEQLVTITEEVITAGNLKKGDLFVLGCTTSEVVGGVIGKNSSAEVGQWIVSTLIEQLDKKGISLAVQGCEHINRALAMERRVAEEKGFEIVSVVPQLHAGGSCSVAAFEKFDEPVEVEHIVAQAGIDIGDTSIGMHVKHVQVPLRLSIRTLGAAHVTALYSRPKYIGGPRAHYETTQERNR.

The protein belongs to the UPF0340 family.

The chain is UPF0340 protein EF_1967 from Enterococcus faecalis (strain ATCC 700802 / V583).